Consider the following 336-residue polypeptide: Glyceraldehyde-3-phosphate dehydrogenase (336 aa).

NAD(+) is bound by residues 12–13, Asp-34, Arg-78, and Ser-120; that span reads RI. D-glyceraldehyde 3-phosphate is bound by residues 151–153 and Thr-182; that span reads SCT. The active-site Nucleophile is the Cys-152. An NAD(+)-binding site is contributed by Asn-183. D-glyceraldehyde 3-phosphate-binding positions include 211-212 and Arg-234; that span reads NG. Asn-316 is a binding site for NAD(+).

This sequence belongs to the glyceraldehyde-3-phosphate dehydrogenase family. As to quaternary structure, homotetramer.

Its subcellular location is the cytoplasm. It carries out the reaction D-glyceraldehyde 3-phosphate + phosphate + NAD(+) = (2R)-3-phospho-glyceroyl phosphate + NADH + H(+). Its pathway is carbohydrate degradation; glycolysis; pyruvate from D-glyceraldehyde 3-phosphate: step 1/5. Its function is as follows. Catalyzes the oxidative phosphorylation of glyceraldehyde 3-phosphate (G3P) to 1,3-bisphosphoglycerate (BPG) using the cofactor NAD. The first reaction step involves the formation of a hemiacetal intermediate between G3P and a cysteine residue, and this hemiacetal intermediate is then oxidized to a thioester, with concomitant reduction of NAD to NADH. The reduced NADH is then exchanged with the second NAD, and the thioester is attacked by a nucleophilic inorganic phosphate to produce BPG. The polypeptide is Glyceraldehyde-3-phosphate dehydrogenase (gap) (Heyndrickxia coagulans (Weizmannia coagulans)).